Reading from the N-terminus, the 242-residue chain is uncharacterized protein (242 aa).

Disordered stretches follow at residues 16-121 (GLYK…GAMA) and 152-178 (PVRP…TQPV). Pro residues-rich tracts occupy residues 50–64 (PRPP…PSPA) and 97–113 (EPRP…PPGP). Positions 157 to 172 (KLPKGKGRLRRPRQSR) are enriched in basic residues. T175 carries the post-translational modification Phosphothreonine. 5 positions are modified to phosphoserine: S192, S206, S216, S232, and S238. The interval 215–242 (QSLSLQREPLGSCKLRNSLDSSDSDSAL) is disordered. A compositionally biased stretch (low complexity) spans 232–242 (SLDSSDSDSAL).

It localises to the cytoplasm. This is an uncharacterized protein from Rattus norvegicus (Rat).